A 178-amino-acid polypeptide reads, in one-letter code: Oligoribonuclease (178 aa).

One can recognise an Exonuclease domain in the interval 7–168; sequence LIWIDLEMTG…DDIRESIAEL (162 aa). The active site involves tyrosine 128.

It belongs to the oligoribonuclease family.

Its subcellular location is the cytoplasm. Its function is as follows. 3'-to-5' exoribonuclease specific for small oligoribonucleotides. The polypeptide is Oligoribonuclease (Pseudomonas syringae pv. syringae (strain B728a)).